We begin with the raw amino-acid sequence, 330 residues long: PDZ and LIM domain protein 4 (330 aa).

One can recognise a PDZ domain in the interval 8 to 84; it reads RGPSPWGFRL…QLLLSVSRAE (77 aa). Disordered stretches follow at residues 106-152 and 163-182; these read EPEP…SSSA and LHIS…RNRN. Positions 139 to 152 are enriched in polar residues; the sequence is QHPQPSRPHASSSA. Positions 255–305 constitute an LIM zinc-binding domain; sequence CTRCGNGIVGTIVKARDKLYHPECFMCDDCGLNLKQRGYFFIEEQLYCETH.

In terms of assembly, interacts (via LIM domain) with PTPN13. Interacts (via PDZ domain) with ACTN1.

The protein resides in the cytoplasm. It localises to the cytoskeleton. Its subcellular location is the cell projection. The protein localises to the dendritic spine. It is found in the early endosome membrane. The protein resides in the recycling endosome membrane. It localises to the nucleus. Its subcellular location is the perinuclear region. The protein localises to the lamellipodium. It is found in the synapse. The protein resides in the synaptosome. Suppresses SRC activation by recognizing and binding to active SRC and facilitating PTPN13-mediated dephosphorylation of SRC 'Tyr-419' leading to its inactivation. Inactivated SRC dissociates from this protein allowing the initiation of a new SRC inactivation cycle. Involved in reorganization of the actin cytoskeleton. In nonmuscle cells, binds to ACTN1 (alpha-actinin-1), increases the affinity of ACTN1 to F-actin (filamentous actin), and promotes formation of actin stress fibers. Involved in regulation of the synaptic AMPA receptor transport in dendritic spines of hippocampal pyramidal neurons directing the receptors toward an insertion at the postsynaptic membrane. Links endosomal surface-internalized GRIA1-containing AMPA receptors to the alpha-actinin/actin cytoskeleton. Increases AMPA receptor-mediated excitatory postsynaptic currents in neurons. The protein is PDZ and LIM domain protein 4 (PDLIM4) of Gallus gallus (Chicken).